Reading from the N-terminus, the 317-residue chain is Type II restriction enzyme NaeI (317 aa).

In terms of assembly, homodimer.

The enzyme catalyses Endonucleolytic cleavage of DNA to give specific double-stranded fragments with terminal 5'-phosphates.. An E and P subtype restriction enzyme that recognizes the double-stranded unmethylated sequence 5'-GCCGGC-3' and cleaves after C-3. In Lentzea aerocolonigenes (Lechevalieria aerocolonigenes), this protein is Type II restriction enzyme NaeI.